Consider the following 716-residue polypeptide: MAKTAKSKQSVDVADLTKAQAKVEWKRLALELETHDRLYYQEDAPKISDAAYDELRRRFNAIEKRFPELVSRDSPSQTVGAAPSGRFKKVRHAVPMLSLDNAFAEEDVRDFVGRIARFLKLAEDDRIAFSAEPKIDGLSMSLRYEGGQLVTAATRGDGAEGEDVTANIRTLKDVPQKLHGRNLPDICEIRGEVYMTKQAFLALNERQKEAGDTIFANPRNSAAGSLRQKDPTITASRPLGFFAYAWGDMSAMPAETQSGMIKWFEHCGFTTNPLTKLCHSVEELIAFHRAIEEQRAELDYDIDGVVYKVDRIDWQERLGFVSRTPRWGIAHKFPAERAMTVLKDIEIQVGRTGSFTPVGKLEPVGVGGVIVQNVTLHNEDYIKGIGNKGEVLREGRDIRIGDTVVIQRAGDVIPQVVDVLIDKRPADAEVFAFPRKCPCPLHTDVVREETAAGEEGSRARCTGEFACPYQKIEHLKLFASRRAFDIDGLGEKQIQFFFDEGWVKEPADIFTLQKRNAKLKLEEVEGYGETSVRNLFNAIEARREMALERFIYALGMRYVGETTALALARGYGSWEAFHDACLKVANGDEEAIAEMDALDQIGETVIKSVAAYFGEDHNRGIVERLTREVKILDAEKPKRNSPIATKTVVFTGTLEKMTRDEAKATAERLGAKVSGSVSKKTDYVVAGPGAGSKLKDAEKHGVKVLTEDEWLQLIGE.

Residues 49 to 53, 98 to 99, and Glu132 each bind NAD(+); these read DAAYD and SL. Lys134 serves as the catalytic N6-AMP-lysine intermediate. NAD(+) is bound by residues Arg155, Glu192, Lys308, and Lys332. Zn(2+) is bound by residues Cys437, Cys439, Cys461, and Cys467. One can recognise a BRCT domain in the interval 638 to 716; it reads KRNSPIATKT…EDEWLQLIGE (79 aa).

The protein belongs to the NAD-dependent DNA ligase family. LigA subfamily. Mg(2+) is required as a cofactor. Requires Mn(2+) as cofactor.

It carries out the reaction NAD(+) + (deoxyribonucleotide)n-3'-hydroxyl + 5'-phospho-(deoxyribonucleotide)m = (deoxyribonucleotide)n+m + AMP + beta-nicotinamide D-nucleotide.. Functionally, DNA ligase that catalyzes the formation of phosphodiester linkages between 5'-phosphoryl and 3'-hydroxyl groups in double-stranded DNA using NAD as a coenzyme and as the energy source for the reaction. It is essential for DNA replication and repair of damaged DNA. This Bradyrhizobium sp. (strain ORS 278) protein is DNA ligase.